A 493-amino-acid polypeptide reads, in one-letter code: Glycerol kinase 2 (493 aa).

Ser12 contributes to the ADP binding site. ATP is bound by residues Ser12 and Thr13. A sn-glycerol 3-phosphate-binding site is contributed by Ser12. Lys16 serves as a coordination point for ADP. Sn-glycerol 3-phosphate-binding residues include Arg82, Glu83, Tyr134, and Asp243. Residues Arg82, Glu83, Tyr134, Asp243, and Gln244 each coordinate glycerol. Positions 265 and 308 each coordinate ADP. ATP-binding residues include Thr265, Gly308, and Asn312. Asn413 is a binding site for ADP.

This sequence belongs to the FGGY kinase family. As to quaternary structure, homotetramer and homodimer (in equilibrium).

It catalyses the reaction glycerol + ATP = sn-glycerol 3-phosphate + ADP + H(+). It functions in the pathway polyol metabolism; glycerol degradation via glycerol kinase pathway; sn-glycerol 3-phosphate from glycerol: step 1/1. Its activity is regulated as follows. Activated by phosphorylation and inhibited by fructose 1,6-bisphosphate (FBP). Its function is as follows. Key enzyme in the regulation of glycerol uptake and metabolism. Catalyzes the phosphorylation of glycerol to yield sn-glycerol 3-phosphate. The sequence is that of Glycerol kinase 2 from Clostridium tetani (strain Massachusetts / E88).